The following is an 803-amino-acid chain: Protein AMEIOTIC 1 homolog (803 aa).

Disordered stretches follow at residues Arg21–Ser64 and Arg264–Ala333. Residues Asn39–Lys50 show a composition bias toward basic and acidic residues. Polar residues predominate over residues Asn51–Ser64. Over residues Lys283–Arg295 the composition is skewed to basic and acidic residues. The span at Ala296–Lys313 shows a compositional bias: basic residues. Residues Arg314–Ala333 show a composition bias toward basic and acidic residues. The stretch at Val450–Leu567 forms a coiled coil. Positions Ile651–Ala688 are disordered.

The protein resides in the nucleus. Its subcellular location is the chromosome. Plays a fundamental role in building the proper chromosome structure at the beginning of meiosis in male meiocytes. Required for the transition from leptotene to zygotene in meiocytes. Required for homologous chromosome pairing. This Oryza sativa subsp. japonica (Rice) protein is Protein AMEIOTIC 1 homolog.